The primary structure comprises 921 residues: Sodium/calcium exchanger 2 (921 aa).

The N-terminal stretch at 1-20 (MAPLALVGVALLLGAPHCLG) is a signal peptide. Over 21–68 (EATPTPSLPPPPANDSDASPGGCQGSYRCQPGVLLPVWEPDDPSLGDK) the chain is Extracellular. Residues 23–42 (TPTPSLPPPPANDSDASPGG) are disordered. Asn34 carries N-linked (GlcNAc...) asparagine glycosylation. A helical transmembrane segment spans residues 69-90 (AARAVVYFVAMVYMFLGLSIIA). The Cytoplasmic segment spans residues 91 to 130 (DRFMASIEVITSKEKEITITKANGETSVGTVRIWNETVSN). The helical transmembrane segment at 131-152 (LTLMALGSSAPEILLSVIEVCG) threads the bilayer. One copy of the Alpha-1 repeat lies at 135–175 (ALGSSAPEILLSVIEVCGHNFQAGELGPGTIVGSAAFNMFV). Residues 153–164 (HNFQAGELGPGT) lie on the Extracellular side of the membrane. Residues 165–185 (IVGSAAFNMFVVIAVCVYVIP) traverse the membrane as a helical segment. At 186–196 (AGESRKIKHLR) the chain is on the cytoplasmic side. A helical transmembrane segment spans residues 197–219 (VFFVTASWSIFAYVWLYLILAVF). At 220–222 (SPG) the chain is on the extracellular side. The helical transmembrane segment at 223–246 (VVQVWEALLTLVFFPVCVVFAWMA) threads the bilayer. Over 247–720 (DKRLLFYKYV…DGSREERLPS (474 aa)) the chain is Cytoplasmic. The interval 248 to 267 (KRLLFYKYVYKRYRTDPRSG) is putative calmodulin-binding region. The disordered stretch occupies residues 372 to 391 (AADAARRPGANDGAPDDEDD). 2 consecutive Calx-beta domains span residues 384 to 483 (GAPD…VRLL) and 512 to 612 (ATVT…IELG). Positions 407, 443, 468, 469, 471, 473, 476, 518, 519, 520, 536, 598, 599, and 600 each coordinate Ca(2+). The residue at position 622 (Ser622) is a Phosphoserine. A Ca(2+)-binding site is contributed by Glu665. A helical membrane pass occupies residues 721–740 (CFDYVMHFLTVFWKVLFACL). The Extracellular portion of the chain corresponds to 741–747 (PPTEYCH). Residues 748–770 (GWACFGVCILVIGLLTALIGDLA) form a helical membrane-spanning segment. At 771–772 (SH) the chain is on the cytoplasmic side. The chain crosses the membrane as a helical span at residues 773–791 (FGCTVGLKDSVNAVVFVAL). Residues 790–826 (ALGTSIPDTFASKVAALQDQCADASIGNVTGSNAVNV) form an Alpha-2 repeat. The Extracellular portion of the chain corresponds to 792–822 (GTSIPDTFASKVAALQDQCADASIGNVTGSN). A glycan (N-linked (GlcNAc...) asparagine) is linked at Asn817. The helical transmembrane segment at 823–843 (AVNVFLGLGVAWSVAAVYWAV) threads the bilayer. Residues 844 to 854 (QGRPFEVRTGT) are Cytoplasmic-facing. A helical transmembrane segment spans residues 855–875 (LAFSVTLFTVFAFVGIAVLLY). Residues 876-892 (RRRPHIGGELGGPRGPK) are Extracellular-facing. Residues 893 to 909 (LATTALFLGLWFLYILF) form a helical membrane-spanning segment. At 910–921 (ASLEAYCHIRGF) the chain is on the cytoplasmic side.

The protein belongs to the Ca(2+):cation antiporter (CaCA) (TC 2.A.19) family. SLC8 subfamily. In terms of tissue distribution, detected in neocortex and hippocampus on pyramidal cells, astrocyte processes and dendrites (at protein level). Brain and skeletal muscle.

The protein localises to the cell membrane. It localises to the basolateral cell membrane. The protein resides in the perikaryon. It is found in the cell projection. Its subcellular location is the dendrite. The protein localises to the dendritic spine. The catalysed reaction is Ca(2+)(in) + 3 Na(+)(out) = Ca(2+)(out) + 3 Na(+)(in). Calcium transport is down-regulated by Na(+) and stimulated by Ca(2+). Mediates the electrogenic exchange of Ca(2+) against Na(+) ions across the cell membrane, and thereby contributes to the regulation of cytoplasmic Ca(2+) levels and Ca(2+)-dependent cellular processes. Contributes to cellular Ca(2+) homeostasis in excitable cells. Contributes to the rapid decrease of cytoplasmic Ca(2+) levels back to baseline after neuronal activation, and thereby contributes to modulate synaptic plasticity, learning and memory. Plays a role in regulating urinary Ca(2+) and Na(+) excretion. The protein is Sodium/calcium exchanger 2 (Slc8a2) of Rattus norvegicus (Rat).